The sequence spans 366 residues: 3-dehydroquinate synthase (366 aa).

Residues Asp71–Lys76, Gly105–Asp109, Thr129–Thr130, Lys142, Lys151, and Cys169–Thr172 each bind NAD(+). Glu184, His248, and His265 together coordinate Zn(2+).

Belongs to the sugar phosphate cyclases superfamily. Dehydroquinate synthase family. The cofactor is NAD(+). Co(2+) serves as cofactor. It depends on Zn(2+) as a cofactor.

The protein resides in the cytoplasm. It catalyses the reaction 7-phospho-2-dehydro-3-deoxy-D-arabino-heptonate = 3-dehydroquinate + phosphate. It functions in the pathway metabolic intermediate biosynthesis; chorismate biosynthesis; chorismate from D-erythrose 4-phosphate and phosphoenolpyruvate: step 2/7. In terms of biological role, catalyzes the conversion of 3-deoxy-D-arabino-heptulosonate 7-phosphate (DAHP) to dehydroquinate (DHQ). In Photorhabdus laumondii subsp. laumondii (strain DSM 15139 / CIP 105565 / TT01) (Photorhabdus luminescens subsp. laumondii), this protein is 3-dehydroquinate synthase.